The primary structure comprises 140 residues: Sex-regulated protein janus-B (140 aa).

Arginine 42 serves as a coordination point for substrate. The Proton acceptor role is filled by histidine 69. 110–112 (SRT) contacts substrate.

This sequence belongs to the janus family.

In terms of biological role, janA and janB regulate somatic sex differentiation. The chain is Sex-regulated protein janus-B (janB) from Drosophila simulans (Fruit fly).